Reading from the N-terminus, the 121-residue chain is Large ribosomal subunit protein bL12 (121 aa).

This sequence belongs to the bacterial ribosomal protein bL12 family. In terms of assembly, homodimer. Part of the ribosomal stalk of the 50S ribosomal subunit. Forms a multimeric L10(L12)X complex, where L10 forms an elongated spine to which 2 to 4 L12 dimers bind in a sequential fashion. Binds GTP-bound translation factors.

Its function is as follows. Forms part of the ribosomal stalk which helps the ribosome interact with GTP-bound translation factors. Is thus essential for accurate translation. The chain is Large ribosomal subunit protein bL12 from Pseudomonas fluorescens (strain Pf0-1).